The chain runs to 114 residues: Non-specific lipid-transfer protein 2 (114 aa).

An N-terminal signal peptide occupies residues M1 to E23. Intrachain disulfides connect C27–C73, C37–C50, C51–C96, and C71–C110.

It belongs to the plant LTP family.

Plant non-specific lipid-transfer proteins transfer phospholipids as well as galactolipids across membranes. May play a role in wax or cutin deposition in the cell walls of expanding epidermal cells and certain secretory tissues. This is Non-specific lipid-transfer protein 2 (LTP2) from Solanum pennellii (Tomato).